The following is a 149-amino-acid chain: D-aminoacyl-tRNA deacylase (149 aa).

Residues 137 to 138 (GP) carry the Gly-cisPro motif, important for rejection of L-amino acids motif.

Belongs to the DTD family. In terms of assembly, homodimer.

It is found in the cytoplasm. It catalyses the reaction glycyl-tRNA(Ala) + H2O = tRNA(Ala) + glycine + H(+). It carries out the reaction a D-aminoacyl-tRNA + H2O = a tRNA + a D-alpha-amino acid + H(+). An aminoacyl-tRNA editing enzyme that deacylates mischarged D-aminoacyl-tRNAs. Also deacylates mischarged glycyl-tRNA(Ala), protecting cells against glycine mischarging by AlaRS. Acts via tRNA-based rather than protein-based catalysis; rejects L-amino acids rather than detecting D-amino acids in the active site. By recycling D-aminoacyl-tRNA to D-amino acids and free tRNA molecules, this enzyme counteracts the toxicity associated with the formation of D-aminoacyl-tRNA entities in vivo and helps enforce protein L-homochirality. This is D-aminoacyl-tRNA deacylase from Clostridium botulinum (strain Eklund 17B / Type B).